The chain runs to 507 residues: ATP synthase subunit alpha, plastid (507 aa).

Gly170–Thr177 is a binding site for ATP.

The protein belongs to the ATPase alpha/beta chains family. In terms of assembly, F-type ATPases have 2 components, CF(1) - the catalytic core - and CF(0) - the membrane proton channel. CF(1) has five subunits: alpha(3), beta(3), gamma(1), delta(1), epsilon(1). CF(0) has four main subunits: a, b, b' and c.

It is found in the plastid membrane. It carries out the reaction ATP + H2O + 4 H(+)(in) = ADP + phosphate + 5 H(+)(out). In terms of biological role, produces ATP from ADP in the presence of a proton gradient across the membrane. The alpha chain is a regulatory subunit. The sequence is that of ATP synthase subunit alpha, plastid from Aneura mirabilis (Parasitic liverwort).